Reading from the N-terminus, the 241-residue chain is 2-C-methyl-D-erythritol 4-phosphate cytidylyltransferase (241 aa).

Belongs to the IspD/TarI cytidylyltransferase family. IspD subfamily. In terms of assembly, homodimer.

It carries out the reaction 2-C-methyl-D-erythritol 4-phosphate + CTP + H(+) = 4-CDP-2-C-methyl-D-erythritol + diphosphate. It participates in isoprenoid biosynthesis; isopentenyl diphosphate biosynthesis via DXP pathway; isopentenyl diphosphate from 1-deoxy-D-xylulose 5-phosphate: step 2/6. Its function is as follows. Catalyzes the formation of 4-diphosphocytidyl-2-C-methyl-D-erythritol from CTP and 2-C-methyl-D-erythritol 4-phosphate (MEP). The polypeptide is 2-C-methyl-D-erythritol 4-phosphate cytidylyltransferase (Yersinia pseudotuberculosis serotype IB (strain PB1/+)).